A 75-amino-acid polypeptide reads, in one-letter code: DNA-directed RNA polymerase subunit Rpo5 (75 aa).

Belongs to the archaeal Rpo5/eukaryotic RPB5 RNA polymerase subunit family. Part of the RNA polymerase complex.

The protein resides in the cytoplasm. The catalysed reaction is RNA(n) + a ribonucleoside 5'-triphosphate = RNA(n+1) + diphosphate. In terms of biological role, DNA-dependent RNA polymerase (RNAP) catalyzes the transcription of DNA into RNA using the four ribonucleoside triphosphates as substrates. The polypeptide is DNA-directed RNA polymerase subunit Rpo5 (Pyrobaculum aerophilum (strain ATCC 51768 / DSM 7523 / JCM 9630 / CIP 104966 / NBRC 100827 / IM2)).